Reading from the N-terminus, the 188-residue chain is Elongation factor P-like protein (188 aa).

Belongs to the elongation factor P family.

The sequence is that of Elongation factor P-like protein from Xylella fastidiosa (strain M23).